We begin with the raw amino-acid sequence, 244 residues long: Nuclear protein UL4 homolog (244 aa).

Residues 193–227 (RPDDQTTPTPTPHQYTSQRRQPETNCPSSPQPAFF) are disordered. Polar residues predominate over residues 205–220 (HQYTSQRRQPETNCPS).

Belongs to the alphaherpesvirinae HHV-1 UL4 family.

The protein resides in the host nucleus. This chain is Nuclear protein UL4 homolog, found in Varicella-zoster virus (strain Dumas) (HHV-3).